Reading from the N-terminus, the 305-residue chain is Ubiquinone biosynthesis protein COQ4 homolog, mitochondrial (305 aa).

Zn(2+) contacts are provided by His150, Asp151, His154, and Glu166.

The protein belongs to the COQ4 family. Component of a multi-subunit COQ enzyme complex. Requires Zn(2+) as cofactor.

Its subcellular location is the mitochondrion inner membrane. The catalysed reaction is a 4-hydroxy-3-methoxy-5-(all-trans-polyprenyl)benzoate + H(+) = a 2-methoxy-6-(all-trans-polyprenyl)phenol + CO2. The protein operates within cofactor biosynthesis; ubiquinone biosynthesis. In terms of biological role, lyase that catalyzes the C1-decarboxylation of 4-hydroxy-3-methoxy-5-(all-trans-polyprenyl)benzoic acid into 2-methoxy-6-(all-trans-polyprenyl)phenol during ubiquinone biosynthesis. In Cryptosporidium parvum (strain Iowa II), this protein is Ubiquinone biosynthesis protein COQ4 homolog, mitochondrial.